The chain runs to 562 residues: Potassium-transporting ATPase potassium-binding subunit (562 aa).

12 helical membrane-spanning segments follow: residues 6–26 (FLLI…LGGF), 62–82 (YALA…VLLM), 132–152 (GLTV…FALI), 175–195 (LYVL…QGVL), 253–273 (FVQM…FGQV), 283–303 (LIWA…YAEL), 327–347 (FGIL…CGAV), 356–376 (ALGG…FGGV), 379–399 (GLYG…LMIG), 416–436 (MTAL…ALAL), 483–503 (LLLA…VLAI), and 526–546 (LFIG…FIPA).

Belongs to the KdpA family. The system is composed of three essential subunits: KdpA, KdpB and KdpC.

The protein localises to the cell inner membrane. Its function is as follows. Part of the high-affinity ATP-driven potassium transport (or Kdp) system, which catalyzes the hydrolysis of ATP coupled with the electrogenic transport of potassium into the cytoplasm. This subunit binds the periplasmic potassium ions and delivers the ions to the membrane domain of KdpB through an intramembrane tunnel. This chain is Potassium-transporting ATPase potassium-binding subunit, found in Yersinia pseudotuberculosis serotype IB (strain PB1/+).